Consider the following 289-residue polypeptide: Acetyl-coenzyme A carboxylase carboxyl transferase subunit beta (289 aa).

One can recognise a CoA carboxyltransferase N-terminal domain in the interval 28–289; the sequence is LWSKCPSCEA…ALLQKLPAAA (262 aa). The Zn(2+) site is built by cysteine 32, cysteine 35, cysteine 51, and cysteine 54. The C4-type zinc finger occupies 32-54; that stretch reads CPSCEAVLYATDLENNLQVCPKC.

This sequence belongs to the AccD/PCCB family. In terms of assembly, acetyl-CoA carboxylase is a heterohexamer composed of biotin carboxyl carrier protein (AccB), biotin carboxylase (AccC) and two subunits each of ACCase subunit alpha (AccA) and ACCase subunit beta (AccD). It depends on Zn(2+) as a cofactor.

It localises to the cytoplasm. The enzyme catalyses N(6)-carboxybiotinyl-L-lysyl-[protein] + acetyl-CoA = N(6)-biotinyl-L-lysyl-[protein] + malonyl-CoA. Its pathway is lipid metabolism; malonyl-CoA biosynthesis; malonyl-CoA from acetyl-CoA: step 1/1. Functionally, component of the acetyl coenzyme A carboxylase (ACC) complex. Biotin carboxylase (BC) catalyzes the carboxylation of biotin on its carrier protein (BCCP) and then the CO(2) group is transferred by the transcarboxylase to acetyl-CoA to form malonyl-CoA. The polypeptide is Acetyl-coenzyme A carboxylase carboxyl transferase subunit beta (Dechloromonas aromatica (strain RCB)).